Consider the following 536-residue polypeptide: Lysosomal acid glucosylceramidase (536 aa).

Positions 1 to 39 (MELSSPSREEYPMPRGRVGIMAASLMGLLLLHTVSWVSG) are cleaved as a signal peptide. Intrachain disulfides connect cysteine 43/cysteine 55 and cysteine 57/cysteine 62. N-linked (GlcNAc...) asparagine glycosylation is found at asparagine 58, asparagine 98, asparagine 185, and asparagine 208. Glutamate 274 serves as the catalytic Proton donor. An N-linked (GlcNAc...) asparagine glycan is attached at asparagine 309. The active-site Nucleophile is the glutamate 379. N-linked (GlcNAc...) asparagine glycosylation is present at asparagine 501.

This sequence belongs to the glycosyl hydrolase 30 family. Interacts with saposin-C. Interacts with SCARB2. Interacts with TCP1. Interacts with GRN; this interaction prevents aggregation of GBA1-SCARB2 complex via interaction with HSPA1A upon stress.

The protein resides in the lysosome membrane. It carries out the reaction a beta-D-glucosyl-(1&lt;-&gt;1')-N-acylsphing-4-enine + H2O = an N-acylsphing-4-enine + D-glucose. The enzyme catalyses a beta-D-galactosyl-(1&lt;-&gt;1')-N-acylsphing-4-enine + H2O = an N-acylsphing-4-enine + D-galactose. The catalysed reaction is cholesteryl 3-beta-D-glucoside + H2O = cholesterol + D-glucose. It catalyses the reaction a beta-D-glucosyl-(1&lt;-&gt;1')-N-acylsphing-4-enine + cholesterol = cholesteryl 3-beta-D-glucoside + an N-acylsphing-4-enine. It carries out the reaction beta-D-glucosyl-N-(9Z-octadecenoyl)-sphing-4E-enine + cholesterol = N-(9Z-octadecenoyl)-sphing-4-enine + cholesteryl 3-beta-D-glucoside. The enzyme catalyses beta-D-glucosyl-N-octanoylsphing-4E-enine + cholesterol = N-octanoylsphing-4-enine + cholesteryl 3-beta-D-glucoside. The catalysed reaction is beta-D-glucosyl-N-dodecanoylsphing-4-enine + cholesterol = N-dodecanoylsphing-4-enine + cholesteryl 3-beta-D-glucoside. It catalyses the reaction beta-D-glucosyl-(1&lt;-&gt;1)-N-octadecanoylsphing-4-enine + cholesterol = N-octadecanoylsphing-4-enine + cholesteryl 3-beta-D-glucoside. It carries out the reaction beta-D-glucosyl-(1&lt;-&gt;1')-N-(15Z-tetracosenoyl)-sphing-4-enine + cholesterol = N-(15Z-tetracosenoyl)-sphing-4-enine + cholesteryl 3-beta-D-glucoside. The enzyme catalyses a beta-D-galactosyl-(1&lt;-&gt;1')-N-acylsphing-4-enine + cholesterol = cholesteryl 3-beta-D-galactoside + an N-acylsphing-4-enine. The catalysed reaction is 1-(beta-D-galactosyl)-N-dodecanoylsphing-4-enine + cholesterol = cholesteryl 3-beta-D-galactoside + N-dodecanoylsphing-4-enine. It catalyses the reaction a beta-D-xylosyl-(1&lt;-&gt;1')-N-acylsphing-4-enine + cholesterol = cholesteryl 3-beta-D-xyloside + an N-acylsphing-4-enine. It carries out the reaction beta-D-xylosyl-(1&lt;-&gt;1')-N-(9Z-octadecenoyl)-sphing-4-enine + cholesterol = cholesteryl 3-beta-D-xyloside + N-(9Z-octadecenoyl)-sphing-4-enine. It participates in steroid metabolism; cholesterol metabolism. The protein operates within sphingolipid metabolism. Functionally, glucosylceramidase that catalyzes, within the lysosomal compartment, the hydrolysis of glucosylceramides/GlcCers (such as beta-D-glucosyl-(1&lt;-&gt;1')-N-acylsphing-4-enine) into free ceramides (such as N-acylsphing-4-enine) and glucose. Plays a central role in the degradation of complex lipids and the turnover of cellular membranes. Through the production of ceramides, participates in the PKC-activated salvage pathway of ceramide formation. Catalyzes the glucosylation of cholesterol, through a transglucosylation reaction where glucose is transferred from GlcCer to cholesterol. GlcCer containing mono-unsaturated fatty acids (such as beta-D-glucosyl-N-(9Z-octadecenoyl)-sphing-4-enine) are preferred as glucose donors for cholesterol glucosylation when compared with GlcCer containing same chain length of saturated fatty acids (such as beta-D-glucosyl-N-octadecanoyl-sphing-4-enine). Under specific conditions, may alternatively catalyze the reverse reaction, transferring glucose from cholesteryl 3-beta-D-glucoside to ceramide. Can also hydrolyze cholesteryl 3-beta-D-glucoside producing glucose and cholesterol. Catalyzes the hydrolysis of galactosylceramides/GalCers (such as beta-D-galactosyl-(1&lt;-&gt;1')-N-acylsphing-4-enine), as well as the transfer of galactose between GalCers and cholesterol in vitro, but with lower activity than with GlcCers. Contrary to GlcCer and GalCer, xylosylceramide/XylCer (such as beta-D-xyosyl-(1&lt;-&gt;1')-N-acylsphing-4-enine) is not a good substrate for hydrolysis, however it is a good xylose donor for transxylosylation activity to form cholesteryl 3-beta-D-xyloside. This chain is Lysosomal acid glucosylceramidase (GBA1), found in Bos taurus (Bovine).